A 129-amino-acid polypeptide reads, in one-letter code: Fluoride-specific ion channel FluC (129 aa).

4 consecutive transmembrane segments (helical) span residues 4–24 (VLIV…LGEW), 30–50 (GFPT…GWLL), 63–83 (WSLL…TFSV), and 95–115 (IVAS…AYIG). Residues Gly-73 and Thr-76 each coordinate Na(+).

Belongs to the fluoride channel Fluc/FEX (TC 1.A.43) family.

The protein localises to the cell membrane. The catalysed reaction is fluoride(in) = fluoride(out). With respect to regulation, na(+) is not transported, but it plays an essential structural role and its presence is essential for fluoride channel function. Its function is as follows. Fluoride-specific ion channel. Important for reducing fluoride concentration in the cell, thus reducing its toxicity. The sequence is that of Fluoride-specific ion channel FluC from Oceanobacillus iheyensis (strain DSM 14371 / CIP 107618 / JCM 11309 / KCTC 3954 / HTE831).